A 389-amino-acid chain; its full sequence is tRNA-specific 2-thiouridylase MnmA (389 aa).

ATP is bound by residues 33–40 (GLSGGVDS) and leucine 59. The active-site Nucleophile is cysteine 120. Cysteine 120 and cysteine 219 are joined by a disulfide. An ATP-binding site is contributed by glycine 145. The interval 169 to 171 (KDQ) is interaction with tRNA. Catalysis depends on cysteine 219, which acts as the Cysteine persulfide intermediate. The interaction with tRNA stretch occupies residues 326–327 (RY).

This sequence belongs to the MnmA/TRMU family.

The protein resides in the cytoplasm. The catalysed reaction is S-sulfanyl-L-cysteinyl-[protein] + uridine(34) in tRNA + AH2 + ATP = 2-thiouridine(34) in tRNA + L-cysteinyl-[protein] + A + AMP + diphosphate + H(+). Functionally, catalyzes the 2-thiolation of uridine at the wobble position (U34) of tRNA, leading to the formation of s(2)U34. The polypeptide is tRNA-specific 2-thiouridylase MnmA (Synechococcus sp. (strain WH7803)).